The sequence spans 502 residues: Glutamate--tRNA ligase (502 aa).

The 'HIGH' region signature appears at 9–19 (PSPTGFPHVGT). A 'KMSKS' region motif is present at residues 250 to 254 (KLSKR). An ATP-binding site is contributed by lysine 253.

The protein belongs to the class-I aminoacyl-tRNA synthetase family. Glutamate--tRNA ligase type 1 subfamily. Monomer.

Its subcellular location is the cytoplasm. It carries out the reaction tRNA(Glu) + L-glutamate + ATP = L-glutamyl-tRNA(Glu) + AMP + diphosphate. Its function is as follows. Catalyzes the attachment of glutamate to tRNA(Glu) in a two-step reaction: glutamate is first activated by ATP to form Glu-AMP and then transferred to the acceptor end of tRNA(Glu). In Acinetobacter baumannii (strain AYE), this protein is Glutamate--tRNA ligase.